The chain runs to 883 residues: Aryl hydrocarbon receptor (883 aa).

Residues 1–9 (MSSGANITY) constitute a propeptide that is removed on maturation. Positions 1-38 (MSSGANITYASRKRRKPVQKTVKPIPAEGIKSNPSKRH) are disordered. 2 short sequence motifs (nuclear localization signal) span residues 12–15 (RKRR) and 36–41 (KRHRDR). One can recognise a bHLH domain in the interval 26–79 (PAEGIKSNPSKRHRDRLNTELDRLASLLPFPQDVINKLDKLSVLRLSVSYLRAK). The segment at 37–65 (RHRDRLNTELDRLASLLPFPQDVINKLDK) is DNA-binding. Required for maintaining the overall integrity of the AHR:ARNT heterodimer and its transcriptional activity regions lie at residues 49–81 (LASL…AKSF), 116–124 (LLQALNGFV), and 260–262 (FAI). Residues 63–71 (LDKLSVLRL) carry the Nuclear export signal motif. The region spanning 111–175 (QEGEFLLQAL…AEFQRQLHWA (65 aa)) is the PAS 1 domain. The PAS 2 domain occupies 266 to 336 (LQPPSILEIR…CAESHIRMIK (71 aa)). Residues 342–383 (MTVFRLLAKHSRWRWVQSNARLIYRNGRPDYIIATQRPLTDE) form the PAC domain. A disordered region spans residues 421–449 (LPIRTKSNTSRKDWAPQSTPSKDSFHPSS). The span at 436–449 (PQSTPSKDSFHPSS) shows a compositional bias: polar residues.

As to quaternary structure, homodimer. Heterodimer; efficient DNA binding requires dimerization with another bHLH protein. Interacts with ARNT; the heterodimer ARNT:AHR binds to core DNA sequence 5'-TGCGTG-3' within the dioxin response element (DRE) of target gene promoters and activates their transcription. Binds MYBBP1A. Interacts with coactivators including SRC-1, RIP140 and NOCA7, and with the corepressor SMRT. Interacts with NEDD8 and IVNS1ABP. Interacts with BMAL1. Interacts with HSP90AB1. Interacts with TIPARP; leading to mono-ADP-ribosylation of AHR and subsequent inhibition of AHR. Mono-ADP-ribosylated, leading to inhibit transcription activator activity of AHR.

The protein localises to the cytoplasm. It localises to the nucleus. Ligand-activated transcription factor that enables cells to adapt to changing conditions by sensing compounds from the environment, diet, microbiome and cellular metabolism, and which plays important roles in development, immunity and cancer. Upon ligand binding, translocates into the nucleus, where it heterodimerizes with ARNT and induces transcription by binding to xenobiotic response elements (XRE). Regulates a variety of biological processes, including angiogenesis, hematopoiesis, drug and lipid metabolism, cell motility and immune modulation. Xenobiotics can act as ligands: upon xenobiotic-binding, activates the expression of multiple phase I and II xenobiotic chemical metabolizing enzyme genes (such as the CYP1A1 gene). Mediates biochemical and toxic effects of halogenated aromatic hydrocarbons. Next to xenobiotics, natural ligands derived from plants, microbiota, and endogenous metabolism are potent AHR agonists. Tryptophan (Trp) derivatives constitute an important class of endogenous AHR ligands. Acts as a negative regulator of anti-tumor immunity: indoles and kynurenic acid generated by Trp catabolism act as ligand and activate AHR, thereby promoting AHR-driven cancer cell motility and suppressing adaptive immunity. Regulates the circadian clock by inhibiting the basal and circadian expression of the core circadian component PER1. Inhibits PER1 by repressing the CLOCK-BMAL1 heterodimer mediated transcriptional activation of PER1. The heterodimer ARNT:AHR binds to core DNA sequence 5'-TGCGTG-3' within the dioxin response element (DRE) of target gene promoters and activates their transcription. The sequence is that of Aryl hydrocarbon receptor (Ahr) from Mus musculus molossinus (Japanese house mouse).